Reading from the N-terminus, the 879-residue chain is DNA mismatch repair protein MutS (879 aa).

639–646 (GPNMGGKS) contributes to the ATP binding site.

It belongs to the DNA mismatch repair MutS family.

In terms of biological role, this protein is involved in the repair of mismatches in DNA. It is possible that it carries out the mismatch recognition step. This protein has a weak ATPase activity. This is DNA mismatch repair protein MutS from Aromatoleum aromaticum (strain DSM 19018 / LMG 30748 / EbN1) (Azoarcus sp. (strain EbN1)).